The primary structure comprises 369 residues: MMPTELTSLIPGMFDDFSYDSTASTDDYMNLNFSSFFCKKNNVRQFASHFLPPLYWLVFIVGTLGNSLVILVYWYCTRVKTMTDMFLLNLAIADLLFLATLPFWAIAAAGQWMFQTFMCKVVNSMYKMNFYSCVLLIMCISVDRYIAIVQAMKAQVWRQKRLLYSKMVCITIWVMAAVLCTPEILYSQVSGESGIATCTMVYPKDKNAKLKSAVLILKVTLGFFLPFMVMAFCYTIIIHTLVQAKKSSKHKALKVTITVLTVFIMSQFPYNSILVVQAVDAYAMFISNCTISTNIDICFQVTQTIAFFHSCLNPVLYVFVGERFRRDLVKTLKNLGCISQAQWVSFTRREGSLKLSSMLLETTSGALSL.

At 1–48 (MMPTELTSLIPGMFDDFSYDSTASTDDYMNLNFSSFFCKKNNVRQFAS) the chain is on the extracellular side. Residue Asn32 is glycosylated (N-linked (GlcNAc...) asparagine). 2 disulfide bridges follow: Cys38–Cys289 and Cys119–Cys198. The helical transmembrane segment at 49–74 (HFLPPLYWLVFIVGTLGNSLVILVYW) threads the bilayer. The Cytoplasmic portion of the chain corresponds to 75–85 (YCTRVKTMTDM). A helical membrane pass occupies residues 86–109 (FLLNLAIADLLFLATLPFWAIAAA). At 110 to 120 (GQWMFQTFMCK) the chain is on the extracellular side. Residues 121-150 (VVNSMYKMNFYSCVLLIMCISVDRYIAIVQ) form a helical membrane-spanning segment. Residues 151–159 (AMKAQVWRQ) lie on the Cytoplasmic side of the membrane. The helical transmembrane segment at 160–185 (KRLLYSKMVCITIWVMAAVLCTPEIL) threads the bilayer. Over 186 to 208 (YSQVSGESGIATCTMVYPKDKNA) the chain is Extracellular. Residues 209–243 (KLKSAVLILKVTLGFFLPFMVMAFCYTIIIHTLVQ) form a helical membrane-spanning segment. Topologically, residues 244–248 (AKKSS) are cytoplasmic. Residues 249–283 (KHKALKVTITVLTVFIMSQFPYNSILVVQAVDAYA) form a helical membrane-spanning segment. Topologically, residues 284–290 (MFISNCT) are extracellular. A helical transmembrane segment spans residues 291–321 (ISTNIDICFQVTQTIAFFHSCLNPVLYVFVG). Residues 322–369 (ERFRRDLVKTLKNLGCISQAQWVSFTRREGSLKLSSMLLETTSGALSL) are Cytoplasmic-facing.

It belongs to the G-protein coupled receptor 1 family. In terms of tissue distribution, highly expressed in the thymus and low in lymph nodes and spleen.

It is found in the cell membrane. Functionally, receptor for chemokine SCYA25/TECK. Subsequently transduces a signal by increasing the intracellular calcium ions level. This Mus musculus (Mouse) protein is C-C chemokine receptor type 9 (Ccr9).